Reading from the N-terminus, the 89-residue chain is uncharacterized protein (89 aa).

The chain crosses the membrane as a helical span at residues 28–50 (LYLDLGFSALLFYNSNLLFSFIL).

It is found in the membrane. This is an uncharacterized protein from Archaeoglobus fulgidus (strain ATCC 49558 / DSM 4304 / JCM 9628 / NBRC 100126 / VC-16).